Reading from the N-terminus, the 287-residue chain is Uroplakin-3a (287 aa).

Positions 1-18 are cleaved as a signal peptide; it reads MLLLWALLALGCLRCGWT. Residues 19-207 lie on the Lumenal side of the membrane; sequence VNLQPQLASV…DTWPGRRSGG (189 aa). 3 N-linked (GlcNAc...) asparagine glycosylation sites follow: asparagine 74, asparagine 139, and asparagine 170. Residues 208-235 traverse the membrane as a helical segment; that stretch reads MIVITSILGSLPFFLLVGFAGAIILSFV. Residues 236–287 lie on the Cytoplasmic side of the membrane; it reads DMGSSDGEMTHDSQITQEAVPKTLGTSEPSYSSVNRGPPLDRAEVFSSKLQD. A disordered region spans residues 243 to 287; it reads EMTHDSQITQEAVPKTLGTSEPSYSSVNRGPPLDRAEVFSSKLQD. Residues 259–270 show a composition bias toward polar residues; that stretch reads LGTSEPSYSSVN.

This sequence belongs to the uroplakin-3 family. Heterodimer with uroplakin-1B (UPK1B).

It is found in the endoplasmic reticulum membrane. Its function is as follows. Component of the asymmetric unit membrane (AUM); a highly specialized biomembrane elaborated by terminally differentiated urothelial cells. May play an important role in AUM-cytoskeleton interaction in terminally differentiated urothelial cells. It also contributes to the formation of urothelial glycocalyx which may play an important role in preventing bacterial adherence. The protein is Uroplakin-3a (Upk3a) of Mus musculus (Mouse).